Here is a 55-residue protein sequence, read N- to C-terminus: uncharacterized protein (55 aa).

The helical transmembrane segment at 27–47 (IFLIYHFSPIYCPYLFLFTVF) threads the bilayer.

The protein localises to the membrane. This is an uncharacterized protein from Acheta domesticus (House cricket).